A 408-amino-acid chain; its full sequence is Lupus La protein (408 aa).

Residues 7-99 form the HTH La-type RNA-binding domain; that stretch reads NEKMAALEAK…RRSPSKPLPE (93 aa). Phosphoserine occurs at positions 92 and 94. The RRM domain occupies 111–187; that stretch reads RSVYIKGFPT…TDLLILFKDD (77 aa). Lysine 116 carries the post-translational modification N6-acetyllysine. Position 120 is a phosphothreonine (threonine 120). Position 128 is an N6-acetyllysine (lysine 128). Residue serine 225 is modified to Phosphoserine. The region spanning 227 to 348 is the xRRM domain; sequence EEKIGCLLKF…KGKGNKAAQP (122 aa). Residues lysine 328, lysine 341, and lysine 360 each carry the N6-acetyllysine modification. Residues 329–342 are compositionally biased toward basic residues; it reads WKSKGRRFKGKGKG. Residues 329–408 are disordered; it reads WKSKGRRFKG…QKTENGAGDQ (80 aa). A Phosphothreonine modification is found at threonine 362. Phosphoserine; by CK2 is present on serine 366. Residues 384–395 show a composition bias toward basic and acidic residues; the sequence is RAREETDKEEPA.

As to quaternary structure, interacts with DDX15. May interact with RUFY1. In terms of processing, phosphorylated. The phosphorylation sites are at the C-terminal part of the protein. The N-terminus is blocked.

It localises to the nucleus. Its function is as follows. Binds to the 3' poly(U) terminus of nascent RNA polymerase III transcripts, protecting them from exonuclease digestion and facilitating their folding and maturation. In case of Coxsackievirus B3 infection, binds to the viral internal ribosome entry site (IRES) and stimulates the IRES-mediated translation. In Homo sapiens (Human), this protein is Lupus La protein (SSB).